Here is a 616-residue protein sequence, read N- to C-terminus: Probable Xaa-Pro aminopeptidase P (616 aa).

4 residues coordinate Mn(2+): D413, D424, E522, and E536.

The protein belongs to the peptidase M24B family. Requires Mn(2+) as cofactor.

The enzyme catalyses Release of any N-terminal amino acid, including proline, that is linked to proline, even from a dipeptide or tripeptide.. Functionally, catalyzes the removal of a penultimate prolyl residue from the N-termini of peptides. This chain is Probable Xaa-Pro aminopeptidase P (AMPP), found in Paracoccidioides brasiliensis (strain Pb03).